The sequence spans 90 residues: DNA-directed RNA polymerase subunit omega (90 aa).

The interval arginine 69–arginine 90 is disordered.

It belongs to the RNA polymerase subunit omega family. In terms of assembly, the RNAP catalytic core consists of 2 alpha, 1 beta, 1 beta' and 1 omega subunit. When a sigma factor is associated with the core the holoenzyme is formed, which can initiate transcription.

The catalysed reaction is RNA(n) + a ribonucleoside 5'-triphosphate = RNA(n+1) + diphosphate. Promotes RNA polymerase assembly. Latches the N- and C-terminal regions of the beta' subunit thereby facilitating its interaction with the beta and alpha subunits. In Vibrio atlanticus (strain LGP32) (Vibrio splendidus (strain Mel32)), this protein is DNA-directed RNA polymerase subunit omega.